A 95-amino-acid chain; its full sequence is uncharacterized protein (95 aa).

This is an uncharacterized protein from Sulfolobus islandicus rod-shaped virus 1 (SIRV-1).